The primary structure comprises 476 residues: Bifunctional protein HldE (476 aa).

The tract at residues 1-318 (MKPILPDYNN…AEAIHGSRDT (318 aa)) is ribokinase. 195–198 (NMSE) contacts ATP. Residue aspartate 264 is part of the active site. The cytidylyltransferase stretch occupies residues 344 to 476 (MTNGCFDILH…IIDAIKGGRG (133 aa)).

It in the N-terminal section; belongs to the carbohydrate kinase PfkB family. In the C-terminal section; belongs to the cytidylyltransferase family. Homodimer.

It carries out the reaction D-glycero-beta-D-manno-heptose 7-phosphate + ATP = D-glycero-beta-D-manno-heptose 1,7-bisphosphate + ADP + H(+). The catalysed reaction is D-glycero-beta-D-manno-heptose 1-phosphate + ATP + H(+) = ADP-D-glycero-beta-D-manno-heptose + diphosphate. It participates in nucleotide-sugar biosynthesis; ADP-L-glycero-beta-D-manno-heptose biosynthesis; ADP-L-glycero-beta-D-manno-heptose from D-glycero-beta-D-manno-heptose 7-phosphate: step 1/4. The protein operates within nucleotide-sugar biosynthesis; ADP-L-glycero-beta-D-manno-heptose biosynthesis; ADP-L-glycero-beta-D-manno-heptose from D-glycero-beta-D-manno-heptose 7-phosphate: step 3/4. Its pathway is bacterial outer membrane biogenesis; LPS core biosynthesis. Its function is as follows. Catalyzes the phosphorylation of D-glycero-D-manno-heptose 7-phosphate at the C-1 position to selectively form D-glycero-beta-D-manno-heptose-1,7-bisphosphate. Catalyzes the ADP transfer from ATP to D-glycero-beta-D-manno-heptose 1-phosphate, yielding ADP-D-glycero-beta-D-manno-heptose. In Vibrio vulnificus (strain CMCP6), this protein is Bifunctional protein HldE.